A 336-amino-acid chain; its full sequence is Ketol-acid reductoisomerase (NADP(+)) (336 aa).

Residues 1-182 form the KARI N-terminal Rossmann domain; that stretch reads MAVIYYDKDA…GVTRAGVIET (182 aa). Residues 25 to 28, arginine 48, serine 51, serine 53, and 83 to 86 contribute to the NADP(+) site; these read FGSQ and DEHQ. The active site involves histidine 108. Residue glycine 134 participates in NADP(+) binding. Positions 183 to 328 constitute a KARI C-terminal knotted domain; that stretch reads TFKEETETDL…KELRKMMPWL (146 aa). Positions 191, 195, 227, and 231 each coordinate Mg(2+). Serine 252 is a substrate binding site.

It belongs to the ketol-acid reductoisomerase family. It depends on Mg(2+) as a cofactor.

The enzyme catalyses (2R)-2,3-dihydroxy-3-methylbutanoate + NADP(+) = (2S)-2-acetolactate + NADPH + H(+). It carries out the reaction (2R,3R)-2,3-dihydroxy-3-methylpentanoate + NADP(+) = (S)-2-ethyl-2-hydroxy-3-oxobutanoate + NADPH + H(+). It functions in the pathway amino-acid biosynthesis; L-isoleucine biosynthesis; L-isoleucine from 2-oxobutanoate: step 2/4. The protein operates within amino-acid biosynthesis; L-valine biosynthesis; L-valine from pyruvate: step 2/4. In terms of biological role, involved in the biosynthesis of branched-chain amino acids (BCAA). Catalyzes an alkyl-migration followed by a ketol-acid reduction of (S)-2-acetolactate (S2AL) to yield (R)-2,3-dihydroxy-isovalerate. In the isomerase reaction, S2AL is rearranged via a Mg-dependent methyl migration to produce 3-hydroxy-3-methyl-2-ketobutyrate (HMKB). In the reductase reaction, this 2-ketoacid undergoes a metal-dependent reduction by NADPH to yield (R)-2,3-dihydroxy-isovalerate. The chain is Ketol-acid reductoisomerase (NADP(+)) from Thermotoga neapolitana (strain ATCC 49049 / DSM 4359 / NBRC 107923 / NS-E).